The primary structure comprises 586 residues: Arginine--tRNA ligase (586 aa).

Residues 133–143 (ANPTGPLNIVS) carry the 'HIGH' region motif.

The protein belongs to the class-I aminoacyl-tRNA synthetase family. In terms of assembly, monomer.

It is found in the cytoplasm. It carries out the reaction tRNA(Arg) + L-arginine + ATP = L-arginyl-tRNA(Arg) + AMP + diphosphate. The sequence is that of Arginine--tRNA ligase from Leptospira interrogans serogroup Icterohaemorrhagiae serovar Lai (strain 56601).